Reading from the N-terminus, the 745-residue chain is Phosphoribosylformylglycinamidine synthase subunit PurL (745 aa).

His-47 is an active-site residue. 2 residues coordinate ATP: Tyr-50 and Lys-90. Residue Glu-92 participates in Mg(2+) binding. Residues 93–96 and Arg-115 contribute to the substrate site; that span reads SHNH. His-94 serves as the catalytic Proton acceptor. Mg(2+) is bound at residue Asp-116. Gln-240 provides a ligand contact to substrate. Asp-268 lines the Mg(2+) pocket. A substrate-binding site is contributed by 312–314; that stretch reads ESQ. ATP contacts are provided by Asn-501 and Gly-538. Asn-539 contacts Mg(2+). Ser-541 serves as a coordination point for substrate.

Belongs to the FGAMS family. As to quaternary structure, monomer. Part of the FGAM synthase complex composed of 1 PurL, 1 PurQ and 2 PurS subunits.

It is found in the cytoplasm. The catalysed reaction is N(2)-formyl-N(1)-(5-phospho-beta-D-ribosyl)glycinamide + L-glutamine + ATP + H2O = 2-formamido-N(1)-(5-O-phospho-beta-D-ribosyl)acetamidine + L-glutamate + ADP + phosphate + H(+). Its pathway is purine metabolism; IMP biosynthesis via de novo pathway; 5-amino-1-(5-phospho-D-ribosyl)imidazole from N(2)-formyl-N(1)-(5-phospho-D-ribosyl)glycinamide: step 1/2. Part of the phosphoribosylformylglycinamidine synthase complex involved in the purines biosynthetic pathway. Catalyzes the ATP-dependent conversion of formylglycinamide ribonucleotide (FGAR) and glutamine to yield formylglycinamidine ribonucleotide (FGAM) and glutamate. The FGAM synthase complex is composed of three subunits. PurQ produces an ammonia molecule by converting glutamine to glutamate. PurL transfers the ammonia molecule to FGAR to form FGAM in an ATP-dependent manner. PurS interacts with PurQ and PurL and is thought to assist in the transfer of the ammonia molecule from PurQ to PurL. The polypeptide is Phosphoribosylformylglycinamidine synthase subunit PurL (Leptospira borgpetersenii serovar Hardjo-bovis (strain JB197)).